Here is a 511-residue protein sequence, read N- to C-terminus: Probable cytosol aminopeptidase (511 aa).

Mn(2+)-binding residues include K255 and D260. K267 is an active-site residue. The Mn(2+) site is built by D278, D337, and E339. The active site involves R341. The segment at 485–511 is disordered; it reads GAAQAVSPKKAARKEPGAAARKARSAQ.

The protein belongs to the peptidase M17 family. The cofactor is Mn(2+).

It localises to the cytoplasm. The enzyme catalyses Release of an N-terminal amino acid, Xaa-|-Yaa-, in which Xaa is preferably Leu, but may be other amino acids including Pro although not Arg or Lys, and Yaa may be Pro. Amino acid amides and methyl esters are also readily hydrolyzed, but rates on arylamides are exceedingly low.. It catalyses the reaction Release of an N-terminal amino acid, preferentially leucine, but not glutamic or aspartic acids.. Its function is as follows. Presumably involved in the processing and regular turnover of intracellular proteins. Catalyzes the removal of unsubstituted N-terminal amino acids from various peptides. This is Probable cytosol aminopeptidase from Variovorax paradoxus (strain S110).